The sequence spans 391 residues: Succinate--CoA ligase [GDP-forming] subunit beta, mitochondrial (391 aa).

Residues 5 to 233 (KKIMADHGVT…NAEFRQKEIF (229 aa)) form the ATP-grasp domain. Residues Gln-16, 49-51 (GRG), and Leu-105 contribute to the GTP site. Mg(2+) contacts are provided by Asn-202 and Asp-216. Substrate contacts are provided by residues Asn-267 and 324–326 (GIV).

Belongs to the succinate/malate CoA ligase beta subunit family. GTP-specific subunit beta subfamily. Heterodimer of an alpha and a beta subunit. The beta subunit determines specificity for GTP. The cofactor is Mg(2+). In terms of tissue distribution, widely expressed. Not present in breast muscle.

It localises to the mitochondrion. The enzyme catalyses GTP + succinate + CoA = succinyl-CoA + GDP + phosphate. Its pathway is carbohydrate metabolism; tricarboxylic acid cycle; succinate from succinyl-CoA (ligase route): step 1/1. Its function is as follows. GTP-specific succinyl-CoA synthetase functions in the citric acid cycle (TCA), coupling the hydrolysis of succinyl-CoA to the synthesis of GTP and thus represents the only step of substrate-level phosphorylation in the TCA. The beta subunit provides nucleotide specificity of the enzyme and binds the substrate succinate, while the binding sites for coenzyme A and phosphate are found in the alpha subunit. The sequence is that of Succinate--CoA ligase [GDP-forming] subunit beta, mitochondrial from Columba livia (Rock dove).